The following is a 94-amino-acid chain: MKHDPQFRALTPKWHQGYRFQYEPAQKAHVVLYPEGMIKLNESAALIGGLIDGKRTIAAIIDELHQQFPNVPELGMDVDEFMEGAKKKNWIDLV.

This sequence belongs to the PqqD family. In terms of assembly, monomer. Interacts with PqqE.

The protein operates within cofactor biosynthesis; pyrroloquinoline quinone biosynthesis. Its function is as follows. Functions as a PqqA binding protein and presents PqqA to PqqE, in the pyrroloquinoline quinone (PQQ) biosynthetic pathway. This Pseudomonas syringae pv. syringae (strain B728a) protein is PqqA binding protein.